We begin with the raw amino-acid sequence, 488 residues long: 3-octaprenyl-4-hydroxybenzoate carboxy-lyase (488 aa).

N172 provides a ligand contact to Mn(2+). Prenylated FMN-binding positions include 175 to 177, 189 to 191, and 194 to 195; these read IYR, RWL, and RG. E238 contributes to the Mn(2+) binding site. D287 functions as the Proton donor in the catalytic mechanism.

The protein belongs to the UbiD family. In terms of assembly, homohexamer. Requires prenylated FMN as cofactor. It depends on Mn(2+) as a cofactor.

The protein localises to the cell membrane. The enzyme catalyses a 4-hydroxy-3-(all-trans-polyprenyl)benzoate + H(+) = a 2-(all-trans-polyprenyl)phenol + CO2. It functions in the pathway cofactor biosynthesis; ubiquinone biosynthesis. Catalyzes the decarboxylation of 3-octaprenyl-4-hydroxy benzoate to 2-octaprenylphenol, an intermediate step in ubiquinone biosynthesis. The sequence is that of 3-octaprenyl-4-hydroxybenzoate carboxy-lyase from Hahella chejuensis (strain KCTC 2396).